The primary structure comprises 359 residues: Cytoplasmic tRNA 2-thiolation protein 1 (359 aa).

The protein belongs to the TtcA family. CTU1/NCS6/ATPBD3 subfamily. Interacts with NCS2 and URM1. May act by forming a heterodimer with NCS2. Component of a large molecular weight complex of more than 250 kDa.

It localises to the cytoplasm. Its subcellular location is the mitochondrion. It functions in the pathway tRNA modification; 5-methoxycarbonylmethyl-2-thiouridine-tRNA biosynthesis. Plays a central role in 2-thiolation of mcm(5)S(2)U at tRNA wobble positions of tRNA(Lys), tRNA(Glu) and tRNA(Gln). Directly binds tRNAs and probably acts by catalyzing adenylation of tRNAs, an intermediate required for 2-thiolation. It is unclear whether it acts as a sulfurtransferase that transfers sulfur from thiocarboxylated URM1 onto the uridine of tRNAs at wobble position. Prior mcm(5) tRNA modification by the elongator complex is required for 2-thiolation. May also be involved in protein urmylation. May also be involved in protein urmylation and in invasive and pseudohyphal growth. The sequence is that of Cytoplasmic tRNA 2-thiolation protein 1 from Saccharomyces cerevisiae (strain ATCC 204508 / S288c) (Baker's yeast).